The following is an 87-amino-acid chain: MSERNQRKVYTGRVVSDKMDKTITVLVETYKTHSLYGKRVKYSKKYKAHDEQNQAKLGDIVKIMETRPLSATKRFRLDEIVEEAVII.

This sequence belongs to the universal ribosomal protein uS17 family. Part of the 30S ribosomal subunit.

In terms of biological role, one of the primary rRNA binding proteins, it binds specifically to the 5'-end of 16S ribosomal RNA. The chain is Small ribosomal subunit protein uS17 from Bacillus cereus (strain ATCC 14579 / DSM 31 / CCUG 7414 / JCM 2152 / NBRC 15305 / NCIMB 9373 / NCTC 2599 / NRRL B-3711).